The primary structure comprises 376 residues: Actin-related protein T1 (376 aa).

Belongs to the actin family.

Its subcellular location is the cytoplasm. It localises to the cytoskeleton. The protein resides in the nucleus. The protein localises to the cytoplasmic vesicle. It is found in the secretory vesicle. Its subcellular location is the acrosome. Negatively regulates the Hedgehog (SHH) signaling. Binds to the promoter of the SHH signaling mediator, GLI1, and inhibits its expression. This is Actin-related protein T1 (Actrt1) from Rattus norvegicus (Rat).